Here is a 267-residue protein sequence, read N- to C-terminus: Extensin (267 aa).

A disordered region spans residues 1-267 (MCPAFSIFFN…HTPSPPPPYY (267 aa)). Repeats lie at residues 18–33 (PPTY…PKPT), 34–54 (PPTY…PKPT), 55–70 (PPTY…PKPT), 71–91 (PPTY…PKPT), 92–107 (PPTY…PKPT), 108–128 (PPTY…PKPT), 129–144 (PPTY…PKPT), 145–160 (PPTY…PKPT), 161–179 (PPTY…PKPT), 180–195 (PPTY…PKPT), 196–211 (PPTY…PKPT), 212–232 (PPTY…PKPT), and 233–253 (PPTY…YTPT). The highly repetitive stretch occupies residues 18–253 (PPTYTPSPKP…ATKPPTYTPT (236 aa)). Positions 20-267 (TYTPSPKPPT…HTPSPPPPYY (248 aa)) are enriched in pro residues. The tract at residues 261–265 (SPPPP) is extensin repetitive element.

Post-translationally, hydroxylated on proline residues in the S-P-P-P-P repeat. In terms of processing, O-glycosylated on hydroxyprolines. As to expression, mainly in the coleoptile node and root tip.

It localises to the secreted. The protein localises to the primary cell wall. Structural component in primary cell wall. This chain is Extensin (HRGP), found in Zea mays (Maize).